A 160-amino-acid chain; its full sequence is Transcription elongation factor GreA (160 aa).

A coiled-coil region spans residues 49–73 (HAAKEEQSHNEGRIADLEDKLARAD).

The protein belongs to the GreA/GreB family.

In terms of biological role, necessary for efficient RNA polymerase transcription elongation past template-encoded arresting sites. The arresting sites in DNA have the property of trapping a certain fraction of elongating RNA polymerases that pass through, resulting in locked ternary complexes. Cleavage of the nascent transcript by cleavage factors such as GreA or GreB allows the resumption of elongation from the new 3'terminus. GreA releases sequences of 2 to 3 nucleotides. The protein is Transcription elongation factor GreA of Rhodopseudomonas palustris (strain BisA53).